A 365-amino-acid polypeptide reads, in one-letter code: L-lactate oxidase (365 aa).

One can recognise an FMN hydroxy acid dehydrogenase domain in the interval 2–365; sequence TAISSPINLF…QDIDTSFLHL (364 aa). Tyrosine 28 is a pyruvate binding site. Residues 81–83, serine 110, and glutamine 135 each bind FMN; that span reads PMA. Position 137 (tyrosine 137) interacts with pyruvate. Threonine 163 contacts FMN. A pyruvate-binding site is contributed by arginine 172. Residues lysine 239 and serine 261 each coordinate FMN. 2 residues coordinate pyruvate: histidine 263 and arginine 266. The active-site Proton acceptor is histidine 263. Residues 294–298 and arginine 318 each bind FMN; that span reads DGGIR.

Belongs to the FMN-dependent alpha-hydroxy acid dehydrogenase family. Homotetramer. Requires FMN as cofactor.

The catalysed reaction is (S)-lactate + O2 = pyruvate + H2O2. It catalyses the reaction glyoxylate + O2 + H2O = oxalate + H2O2 + H(+). In terms of biological role, catalyzes the oxidation of (S)-lactate (L-lactate) to pyruvate, with a reduction of O2 to H2O2. In extant N2-fixing cyanobacteria such as Nostoc, this enzyme primarily serves as an O2-scavenging enzyme, protecting nitrogenase that is extremely sensitive to O2, and is therefore an essential partner in N2 fixation. Also shows clear oxidase activity with glyoxylate in vitro, and low activity with glycerate, hydroxypyruvate and glycolate. The very low glycolate oxidase activity indicates that this enzyme is unlikely to be involved in photorespiratory glycolate metabolism, a pathway that seems to exist in this cyanobacterium, but in which the oxidation of glycolate is taken over by glycolate dehydrogenase (GlcD). Is not able to use D-lactate as substrate and does not show any dehydrogenase activity with NAD(+) or NADP(+). The chain is L-lactate oxidase from Nostoc sp. (strain PCC 7120 / SAG 25.82 / UTEX 2576).